We begin with the raw amino-acid sequence, 319 residues long: Beta-ketoacyl-[acyl-carrier-protein] synthase III (319 aa).

Catalysis depends on residues Cys113 and His246. Residues 247 to 251 (QANLR) are ACP-binding. Asn276 is a catalytic residue.

It belongs to the thiolase-like superfamily. FabH family. As to quaternary structure, homodimer.

It localises to the cytoplasm. The enzyme catalyses malonyl-[ACP] + acetyl-CoA + H(+) = 3-oxobutanoyl-[ACP] + CO2 + CoA. The protein operates within lipid metabolism; fatty acid biosynthesis. Catalyzes the condensation reaction of fatty acid synthesis by the addition to an acyl acceptor of two carbons from malonyl-ACP. Catalyzes the first condensation reaction which initiates fatty acid synthesis and may therefore play a role in governing the total rate of fatty acid production. Possesses both acetoacetyl-ACP synthase and acetyl transacylase activities. Its substrate specificity determines the biosynthesis of branched-chain and/or straight-chain of fatty acids. The chain is Beta-ketoacyl-[acyl-carrier-protein] synthase III from Laribacter hongkongensis (strain HLHK9).